A 292-amino-acid chain; its full sequence is S-adenosyl-L-methionine-dependent Diels-Alderase iccD (292 aa).

A helical transmembrane segment spans residues 240 to 262 (LPVVRMFYVVLLVPYLFVRLLGI).

The protein belongs to the class I-like SAM-binding methyltransferase superfamily. Erg6/SMT family. S-adenosyl-L-methionine serves as cofactor.

The protein resides in the membrane. It catalyses the reaction 3-[(2E,4E,8S,10E,12Z)-4,8-dimethyltetradeca-2,4,10,12-tetraenoyl]-4-hydroxy-5-(4-hydroxyphenyl)-1,2-dihydropyridin-2-one = 8-epi-ilicicolin H. It functions in the pathway mycotoxin biosynthesis. In terms of biological role, S-adenosyl-l-methionine-dependent Diels-Alderase; part of the gene cluster that mediates the biosynthesis of ilicicolin H, a 4-hydroxy-2-pyridonealkaloid that has potent and broad antifungal activities by inhibiting the mitochondrial respiration chain. IccD catalyzes the Diels-Alder reaction that converts the acyclic 2-pyridone intermediate to 8-epi-ilicicolin H. The biosynthesis of ilicicolin H starts with formation of the tetramic acid by the hybrid PKS-NRPS synthetase iccA with the partnering trans-enoyl reductase iccB since iccA lacks a designated enoylreductase (ER) domain. The cytochrome P450 monooxygenase iccC then catalyzes the ring expansion of the tetramate to the acyclic 2-pyridone. The pericyclase iccD further converts the acyclic 2-pyridone into 8-epi-ilicicolin H. Finally, the epimerase iccE converts 8-epi-ilicicolin H into ilicicolin H via epimerization. IccA to iccE are sufficient for ilicicolin H biosynthesis and the roles of the remaining enzymes, iccF, iccG and iccH within the pathway have still to be determined. The protein is S-adenosyl-L-methionine-dependent Diels-Alderase iccD of Talaromyces variabilis (Penicillium variabile).